Reading from the N-terminus, the 90-residue chain is Small ribosomal subunit protein uS19 (90 aa).

This sequence belongs to the universal ribosomal protein uS19 family.

Functionally, protein S19 forms a complex with S13 that binds strongly to the 16S ribosomal RNA. The chain is Small ribosomal subunit protein uS19 from Methylococcus capsulatus (strain ATCC 33009 / NCIMB 11132 / Bath).